The sequence spans 161 residues: MTDQQNTAASEEETAPQFSLQRIYVRDLSFEAPKSPAIFRQQWDPAVALDLNTRQKALEGDFYEVVLTLSVTVKNGEEVAFIAEVQQAGIFLIKNLDAASMSHTLGAFCPNILFPYARETLDSLVTRGSFPALMLAPVNFDALYAQELQRMQESGETPTVQ.

It belongs to the SecB family. Homotetramer, a dimer of dimers. One homotetramer interacts with 1 SecA dimer.

The protein resides in the cytoplasm. Functionally, one of the proteins required for the normal export of preproteins out of the cell cytoplasm. It is a molecular chaperone that binds to a subset of precursor proteins, maintaining them in a translocation-competent state. It also specifically binds to its receptor SecA. This Pseudomonas fluorescens (strain Pf0-1) protein is Protein-export protein SecB.